Consider the following 556-residue polypeptide: Formate--tetrahydrofolate ligase (556 aa).

65–72 (TPAGEGKT) is a binding site for ATP.

The protein belongs to the formate--tetrahydrofolate ligase family.

It carries out the reaction (6S)-5,6,7,8-tetrahydrofolate + formate + ATP = (6R)-10-formyltetrahydrofolate + ADP + phosphate. Its pathway is one-carbon metabolism; tetrahydrofolate interconversion. The polypeptide is Formate--tetrahydrofolate ligase (Lachnoclostridium phytofermentans (strain ATCC 700394 / DSM 18823 / ISDg) (Clostridium phytofermentans)).